A 186-amino-acid polypeptide reads, in one-letter code: Tumor necrosis factor alpha-induced protein 8-like protein 1 (186 aa).

This sequence belongs to the TNFAIP8 family. Interacts with FBXW5; TNFAIP8L1 competes with TSC2 to bind FBXW5 increasing TSC2 stability by preventing its ubiquitination.

It localises to the cytoplasm. In terms of biological role, acts as a negative regulator of mTOR activity. The protein is Tumor necrosis factor alpha-induced protein 8-like protein 1 (TNFAIP8L1) of Bos taurus (Bovine).